The primary structure comprises 291 residues: Light-independent protochlorophyllide reductase iron-sulfur ATP-binding protein (291 aa).

ATP contacts are provided by residues 10-15 (GIGKST) and Lys-39. Ser-14 is a Mg(2+) binding site. [4Fe-4S] cluster contacts are provided by Cys-95 and Cys-129. 180–181 (NR) lines the ATP pocket.

It belongs to the NifH/BchL/ChlL family. Homodimer. Protochlorophyllide reductase is composed of three subunits; ChlL, ChlN and ChlB. The cofactor is [4Fe-4S] cluster.

The protein resides in the plastid. The protein localises to the chloroplast. The enzyme catalyses chlorophyllide a + oxidized 2[4Fe-4S]-[ferredoxin] + 2 ADP + 2 phosphate = protochlorophyllide a + reduced 2[4Fe-4S]-[ferredoxin] + 2 ATP + 2 H2O. Its pathway is porphyrin-containing compound metabolism; chlorophyll biosynthesis (light-independent). Functionally, component of the dark-operative protochlorophyllide reductase (DPOR) that uses Mg-ATP and reduced ferredoxin to reduce ring D of protochlorophyllide (Pchlide) to form chlorophyllide a (Chlide). This reaction is light-independent. The L component serves as a unique electron donor to the NB-component of the complex, and binds Mg-ATP. This chain is Light-independent protochlorophyllide reductase iron-sulfur ATP-binding protein, found in Pinus thunbergii (Japanese black pine).